A 282-amino-acid chain; its full sequence is Sulfur carrier protein FdhD (282 aa).

Cys-126 functions as the Cysteine persulfide intermediate in the catalytic mechanism. Residue 265–270 (FVRNNR) coordinates Mo-bis(molybdopterin guanine dinucleotide).

It belongs to the FdhD family.

The protein localises to the cytoplasm. Its function is as follows. Required for formate dehydrogenase (FDH) activity. Acts as a sulfur carrier protein that transfers sulfur from IscS to the molybdenum cofactor prior to its insertion into FDH. This Thermoplasma acidophilum (strain ATCC 25905 / DSM 1728 / JCM 9062 / NBRC 15155 / AMRC-C165) protein is Sulfur carrier protein FdhD.